Reading from the N-terminus, the 452-residue chain is Phenylalanine-4-hydroxylase (452 aa).

Serine 16 is subject to Phosphoserine; by PKA. Residues 36–114 form the ACT domain; sequence SLIFSLKEEV…TVHELSRDKK (79 aa). Histidine 285, histidine 290, and glutamate 330 together coordinate Fe cation.

It belongs to the biopterin-dependent aromatic amino acid hydroxylase family. In terms of assembly, homodimer and homotetramer. Requires Fe(2+) as cofactor. Phosphorylation at Ser-16 increases basal activity and facilitates activation by the substrate phenylalanine.

The catalysed reaction is (6R)-L-erythro-5,6,7,8-tetrahydrobiopterin + L-phenylalanine + O2 = (4aS,6R)-4a-hydroxy-L-erythro-5,6,7,8-tetrahydrobiopterin + L-tyrosine. It functions in the pathway amino-acid degradation; L-phenylalanine degradation; acetoacetate and fumarate from L-phenylalanine: step 1/6. Its activity is regulated as follows. N-terminal region of PAH is thought to contain allosteric binding sites for phenylalanine and to constitute an 'inhibitory' domain that regulates the activity of a catalytic domain in the C-terminal portion of the molecule. Catalyzes the hydroxylation of L-phenylalanine to L-tyrosine. The sequence is that of Phenylalanine-4-hydroxylase (PAH) from Homo sapiens (Human).